The primary structure comprises 541 residues: Presenilin homolog (541 aa).

Composition is skewed to polar residues over residues 1–14 and 43–52; these read MAAV…SSGL and NNYGSSNQDQ. Disordered stretches follow at residues 1-52 and 69-92; these read MAAV…NQDQ and CGSR…NEME. At 1 to 106 the chain is on the cytoplasmic side; the sequence is MAAVNLQASC…LKYGAQHVIK (106 aa). The chain crosses the membrane as a helical span at residues 107 to 127; sequence LFVPVSLCMLVVVATINSISF. The Lumenal portion of the chain corresponds to 128–154; it reads YNSTDVYLLYTPFHEQSPEPSVKFWSA. Residue N129 is glycosylated (N-linked (GlcNAc...) asparagine). A helical transmembrane segment spans residues 155-175; sequence LANSLILMSVVVVMTFLLIVL. The Cytoplasmic segment spans residues 176-182; the sequence is YKKRCYR. Residues 183–203 traverse the membrane as a helical segment; that stretch reads IIHGWLILSSFMLLFIFTYLY. The Lumenal segment spans residues 204 to 216; that stretch reads LEELLRAYNIPMD. Residues 217 to 237 traverse the membrane as a helical segment; it reads YPTALLIMWNFGVVGMMSIHW. The Cytoplasmic portion of the chain corresponds to 238–242; it reads QGPLR. A helical membrane pass occupies residues 243 to 263; that stretch reads LQQGYLIFVAALMALVFIKYL. Over 264–265 the chain is Lumenal; the sequence is PE. The helical transmembrane segment at 266-286 threads the bilayer; the sequence is WTAWAVLAAISIWDLIAVLSP. Residue D279 is part of the active site. The Cytoplasmic portion of the chain corresponds to 287 to 453; sequence RGPLRILVET…QNHPDGQEER (167 aa). The interval 320 to 481 is interaction with Mettl2; it reads NTVTPQQSQA…ASSYGDWTTT (162 aa). The span at 327-350 shows a compositional bias: low complexity; sequence SQATASSSPSSSNSTTTTRATQNS. Disordered regions lie at residues 327-379 and 421-449; these read SQAT…DGSV and EVQS…HPDG. 2 stretches are compositionally biased toward polar residues: residues 361–370 and 421–443; these read GQRTGNSHPR and EVQS…TAPD. The helical transmembrane segment at 454–474 threads the bilayer; the sequence is GIKLGLGDFIFYSVLVGKASS. The active site involves D461. The Lumenal portion of the chain corresponds to 475 to 481; that stretch reads YGDWTTT. Residues 482–502 traverse the membrane as a helical segment; sequence IACFVAILIGLCLTLLLLAIW. Over 503-506 the chain is Cytoplasmic; sequence RKAL. Residues 507–509 carry the PAL motif; the sequence is PAL. An intramembrane region (helical) is located at residues 507 to 527; sequence PALPISITFGLIFCFATSAVV. Residues 528–541 lie on the Cytoplasmic side of the membrane; sequence KPFMEDLSAKQVFI.

This sequence belongs to the peptidase A22A family. In terms of assembly, homodimer. Component of the gamma-secretase complex, a complex composed of a presenilin (Psn) homodimer, nicastrin (Nct), Aph-1 and Pen-2. Interacts with Mettl2. Isoform 2 shows a better interaction with Mettl2 than isoform 1. Cleaved. The cleavage, which probably takes place between the 6th and the 7th transmembrane regions, may be required for activation of the gamma-secretase activity. As to expression, maternally expressed in nurse and follicle cells. In early embryos, expressed in all or most cells and later increases in CNS and epidermal tissues. In larvae, expression is seen in all imaginal disks, brain and optic lobes. In pupae, expression is seen in eye disk and brain.

The protein localises to the endoplasmic reticulum membrane. It is found in the golgi apparatus membrane. Functionally, probable catalytic subunit of the gamma-secretase complex, an endoprotease complex that catalyzes the intramembrane cleavage of integral membrane proteins such as Notch receptor. Required for S3 cleavage of Notch, which releases activated Notch protein from the cell membrane. Involved in the patterning of the optic lobes. The polypeptide is Presenilin homolog (Psn) (Drosophila melanogaster (Fruit fly)).